A 373-amino-acid polypeptide reads, in one-letter code: NAD-dependent protein deacylase SRT2 (373 aa).

Residues 1–47 (MNMRRVFGGVSTDLFPSRSMYRPLQSGGNLVMLFKGCRRFVRTTCRV) constitute a mitochondrion transit peptide. Residues 75–373 (DPPNMEDIHK…DVGSLSVPAL (299 aa)) enclose the Deacetylase sirtuin-type domain. NAD(+) contacts are provided by residues 100–120 (GAGVSTECGIPDYRSPNGAYS) and 179–182 (QNVD). The Proton acceptor role is filled by histidine 196. Zn(2+) is bound by residues cysteine 204, cysteine 207, cysteine 271, and cysteine 274. NAD(+) contacts are provided by residues 311–313 (GSS), 337–339 (NIG), and valine 355.

The protein belongs to the sirtuin family. Class II subfamily. As to quaternary structure, binds to the promoter region of genes influenced by ethylene. Interacts with ENAP1; this interaction is enhanced in the presence of ethylene. Requires Zn(2+) as cofactor.

The protein resides in the mitochondrion matrix. Its subcellular location is the nucleus. The catalysed reaction is N(6)-acetyl-L-lysyl-[protein] + NAD(+) + H2O = 2''-O-acetyl-ADP-D-ribose + nicotinamide + L-lysyl-[protein]. Its function is as follows. NAD-dependent protein deacylase. Catalyzes the NAD-dependent hydrolysis of acyl groups from lysine residues. Involved in responses to ethylene leading to the transcriptional repression of some ethylene-responsive genes via the regulation of histone acetylation H3K9Ac. Negatively regulates plant basal defense against plant pathogens, possibly by suppressing salicylic acid biosynthesis. The protein is NAD-dependent protein deacylase SRT2 of Arabidopsis thaliana (Mouse-ear cress).